The chain runs to 215 residues: Cytochrome b6 (215 aa).

The chain crosses the membrane as a helical span at residues I32–F52. C35 serves as a coordination point for heme c. The heme b site is built by H86 and H100. 3 helical membrane passes run A90–F110, L116–Y136, and L186–I206. The heme b site is built by H187 and H202.

Belongs to the cytochrome b family. PetB subfamily. In terms of assembly, the 4 large subunits of the cytochrome b6-f complex are cytochrome b6, subunit IV (17 kDa polypeptide, PetD), cytochrome f and the Rieske protein, while the 4 small subunits are PetG, PetL, PetM and PetN. The complex functions as a dimer. Heme b serves as cofactor. The cofactor is heme c.

Its subcellular location is the cellular thylakoid membrane. Functionally, component of the cytochrome b6-f complex, which mediates electron transfer between photosystem II (PSII) and photosystem I (PSI), cyclic electron flow around PSI, and state transitions. This is Cytochrome b6 from Synechococcus elongatus (strain ATCC 33912 / PCC 7942 / FACHB-805) (Anacystis nidulans R2).